The sequence spans 505 residues: ATP synthase subunit alpha (505 aa).

ATP is bound at residue Gly169–Thr176.

The protein belongs to the ATPase alpha/beta chains family. F-type ATPases have 2 components, CF(1) - the catalytic core - and CF(0) - the membrane proton channel. CF(1) has five subunits: alpha(3), beta(3), gamma(1), delta(1), epsilon(1). CF(0) has three main subunits: a(1), b(2) and c(9-12). The alpha and beta chains form an alternating ring which encloses part of the gamma chain. CF(1) is attached to CF(0) by a central stalk formed by the gamma and epsilon chains, while a peripheral stalk is formed by the delta and b chains.

Its subcellular location is the cell inner membrane. It carries out the reaction ATP + H2O + 4 H(+)(in) = ADP + phosphate + 5 H(+)(out). In terms of biological role, produces ATP from ADP in the presence of a proton gradient across the membrane. The alpha chain is a regulatory subunit. The chain is ATP synthase subunit alpha from Desulfosudis oleivorans (strain DSM 6200 / JCM 39069 / Hxd3) (Desulfococcus oleovorans).